The following is a 218-amino-acid chain: Thymidylate kinase (218 aa).

ATP is bound at residue 15-22 (GLDRSGKS).

It belongs to the thymidylate kinase family.

It carries out the reaction dTMP + ATP = dTDP + ADP. It functions in the pathway pyrimidine metabolism; dTTP biosynthesis. In terms of biological role, catalyzes the conversion of dTMP to dTDP. This Caenorhabditis elegans protein is Thymidylate kinase.